Consider the following 262-residue polypeptide: Probable cutinase 1 (262 aa).

The signal sequence occupies residues 1-19 (MAPLKSLLLGASLATLALS). 2 cysteine pairs are disulfide-bonded: Cys-48–Cys-127 and Cys-74–Cys-88. Ser-138 functions as the Nucleophile in the catalytic mechanism. Cysteines 189 and 196 form a disulfide. Asp-193 is an active-site residue. His-206 (proton donor/acceptor) is an active-site residue. The tract at residues 228-262 (SSSTTSSSSDAASSSSAAGTSSSGLSGLSSFFGGL) is disordered.

This sequence belongs to the cutinase family.

It localises to the secreted. It carries out the reaction cutin + H2O = cutin monomers.. Its function is as follows. Catalyzes the hydrolysis of complex carboxylic polyesters found in the cell wall of plants. Degrades cutin, a macromolecule that forms the structure of the plant cuticle. This is Probable cutinase 1 from Aspergillus niger (strain ATCC MYA-4892 / CBS 513.88 / FGSC A1513).